The following is a 979-amino-acid chain: Collagen alpha-2(I) chain (979 aa).

The tract at residues 1–979 (SGGFDFSFLP…FGYEGDFYRA (979 aa)) is disordered. 4-hydroxyproline occurs at positions 10, 13, 35, and 41. The segment covering 28-41 (LMGPRGPPGASGAP) has biased composition (low complexity). Lysine 88 carries the post-translational modification 5-hydroxylysine; alternate. An O-linked (Gal...) hydroxylysine; alternate glycan is attached at lysine 88. Residues 128-157 (VGAPGPAGARGSDGSVGPVGPAGPIGSAGP) show a composition bias toward low complexity. A compositionally biased stretch (gly residues) spans 256–265 (GESGGKGEPG). A compositionally biased stretch (low complexity) spans 266 to 276 (SAGPQGPPGSS). Gly residues predominate over residues 298 to 307 (GLRGGPGSRG). Proline 341 and proline 344 each carry 4-hydroxyproline. The span at 434–443 (GVQGGKGEQG) shows a compositional bias: gly residues. Low complexity-rich tracts occupy residues 490 to 507 (PGESGAVGPSGAIGSRGP) and 519 to 529 (EPGVVGAPGTA). Residues 530-548 (GPAGSGGPGERGAAGIPGG) are compositionally biased toward gly residues. Low complexity-rich tracts occupy residues 570–599 (RGAPGAVGAPGPAGEAGAAGPAGPAGPRGS) and 606–626 (VGPAGPNGFAGPAGAAGQPGA). A compositionally biased stretch (basic and acidic residues) spans 627–636 (KGERGTKGPK). Residues 644 to 654 (PTGPVGSAGPA) are compositionally biased toward low complexity. The segment covering 664 to 673 (GSRGDGGPPG) has biased composition (gly residues). Over residues 675 to 684 (TGFPGAAGRT) the composition is skewed to low complexity. The segment covering 721 to 730 (GETGAGGPPG) has biased composition (gly residues). Low complexity-rich tracts occupy residues 738-765 (SGEPGTAGPPGTAGPQGLLGAPGILGLP) and 773-783 (LPGVAGAVGEP). A compositionally biased stretch (gly residues) spans 784-802 (GPLGIGPPGARGPSGGDGL). 2 stretches are compositionally biased toward low complexity: residues 811 to 833 (YAGNAGPVGAAGAPGPHGSVGPA) and 841 to 856 (EPGPVGSVGPVGALGP). Positions 866–877 (RGDKGEPGDKGP) are enriched in basic and acidic residues. Pro residues predominate over residues 951–961 (GPGPPGPPGPP).

This sequence belongs to the fibrillar collagen family. As to quaternary structure, trimers of one alpha 2(I) and two alpha 1(I) chains. Interacts (via C-terminus) with TMEM131 (via PapD-L domain); the interaction is direct and is involved in assembly and TRAPPIII ER-to-Golgi transport complex-dependent secretion of collagen. In terms of processing, prolines at the third position of the tripeptide repeating unit (G-X-Y) are hydroxylated in some or all of the chains. In terms of tissue distribution, expressed in bones.

The protein localises to the secreted. It is found in the extracellular space. The protein resides in the extracellular matrix. Functionally, type I collagen is a member of group I collagen (fibrillar forming collagen). This chain is Collagen alpha-2(I) chain, found in Neocnus dousman (Slow ground sloth).